Here is a 334-residue protein sequence, read N- to C-terminus: Glycerol-1-phosphate dehydrogenase [NAD(P)+] (334 aa).

NAD(+) contacts are provided by residues 77-81 and 99-102; these read GRPID and TTAS. Aspartate 104 lines the substrate pocket. Serine 108 contributes to the NAD(+) binding site. Aspartate 147 is a binding site for substrate. Residues aspartate 147 and histidine 225 each coordinate Zn(2+). Histidine 229 contributes to the substrate binding site. Histidine 246 is a binding site for Zn(2+).

It belongs to the glycerol-1-phosphate dehydrogenase family. Zn(2+) serves as cofactor.

Its subcellular location is the cytoplasm. The enzyme catalyses sn-glycerol 1-phosphate + NAD(+) = dihydroxyacetone phosphate + NADH + H(+). The catalysed reaction is sn-glycerol 1-phosphate + NADP(+) = dihydroxyacetone phosphate + NADPH + H(+). It participates in membrane lipid metabolism; glycerophospholipid metabolism. Catalyzes the NAD(P)H-dependent reduction of dihydroxyacetonephosphate (DHAP or glycerone phosphate) to glycerol 1-phosphate (G1P). The G1P thus generated is used as the glycerophosphate backbone of phospholipids in the cellular membranes of Archaea. In Methanococcus maripaludis (strain C6 / ATCC BAA-1332), this protein is Glycerol-1-phosphate dehydrogenase [NAD(P)+].